Reading from the N-terminus, the 219-residue chain is Probable nicotinate-nucleotide adenylyltransferase (219 aa).

The protein belongs to the NadD family.

The enzyme catalyses nicotinate beta-D-ribonucleotide + ATP + H(+) = deamido-NAD(+) + diphosphate. It participates in cofactor biosynthesis; NAD(+) biosynthesis; deamido-NAD(+) from nicotinate D-ribonucleotide: step 1/1. Catalyzes the reversible adenylation of nicotinate mononucleotide (NaMN) to nicotinic acid adenine dinucleotide (NaAD). This is Probable nicotinate-nucleotide adenylyltransferase from Chromohalobacter salexigens (strain ATCC BAA-138 / DSM 3043 / CIP 106854 / NCIMB 13768 / 1H11).